Consider the following 428-residue polypeptide: Something about silencing protein 10 (428 aa).

The segment at 1–93 (MDSDGDDYVM…NTMDWGSKRS (93 aa)) is disordered. Composition is skewed to acidic residues over residues 15-24 (QEYDDEEREI) and 46-62 (SDDDDDDDDDDEEEQQD). Phosphoserine occurs at positions 152, 323, 324, and 337. Residues 317 to 386 (GQQASVSSDD…LRNPRVKHRG (70 aa)) form a disordered region. Over residues 324–336 (SDDDDNDDDDDAE) the composition is skewed to acidic residues. A compositionally biased stretch (acidic residues) spans 344–353 (EEAGEEEEEE). The segment covering 370 to 386 (TPHRKKELRNPRVKHRG) has biased composition (basic residues).

The protein belongs to the SAS10 family.

It localises to the nucleus. In terms of biological role, essential for gene silencing: has a role in the structure of silenced chromatin. May be involved in gene regulation during development. Binds RNA. The polypeptide is Something about silencing protein 10 (Drosophila melanogaster (Fruit fly)).